The primary structure comprises 700 residues: Polyribonucleotide nucleotidyltransferase (700 aa).

Positions 485 and 491 each coordinate Mg(2+). A KH domain is found at Pro-552–Ile-611. Residues Gly-621–Lys-689 enclose the S1 motif domain.

It belongs to the polyribonucleotide nucleotidyltransferase family. Component of the RNA degradosome, which is a multiprotein complex involved in RNA processing and mRNA degradation. It depends on Mg(2+) as a cofactor.

The protein localises to the cytoplasm. The catalysed reaction is RNA(n+1) + phosphate = RNA(n) + a ribonucleoside 5'-diphosphate. In terms of biological role, involved in mRNA degradation. Catalyzes the phosphorolysis of single-stranded polyribonucleotides processively in the 3'- to 5'-direction. This is Polyribonucleotide nucleotidyltransferase from Shewanella baltica (strain OS155 / ATCC BAA-1091).